The following is a 353-amino-acid chain: Cruciform cutting endonuclease 1, mitochondrial (353 aa).

Mg(2+)-binding residues include aspartate 293 and aspartate 294.

As to quaternary structure, homodimer. Mg(2+) serves as cofactor.

Its subcellular location is the mitochondrion. It carries out the reaction Endonucleolytic cleavage at a junction such as a reciprocal single-stranded crossover between two homologous DNA duplexes (Holliday junction).. In terms of biological role, capable of resolving Holliday junctions. Specific for 4-way junctions. Seems to be important for the maintenance of mitochondrial DNA. Cleaves fixed junctions at the point of strand exchange. Cleaves after 5'-CT-3' sequence. The sequence is that of Cruciform cutting endonuclease 1, mitochondrial (CCE1) from Saccharomyces cerevisiae (strain ATCC 204508 / S288c) (Baker's yeast).